Consider the following 207-residue polypeptide: Thiamine-phosphate synthase (207 aa).

Residues 37–41 (QLREK) and asparagine 69 each bind 4-amino-2-methyl-5-(diphosphooxymethyl)pyrimidine. Positions 70 and 89 each coordinate Mg(2+). Residue serine 108 participates in 4-amino-2-methyl-5-(diphosphooxymethyl)pyrimidine binding. Residue 134–136 (TGS) participates in 2-[(2R,5Z)-2-carboxy-4-methylthiazol-5(2H)-ylidene]ethyl phosphate binding. Lysine 137 contributes to the 4-amino-2-methyl-5-(diphosphooxymethyl)pyrimidine binding site. 2-[(2R,5Z)-2-carboxy-4-methylthiazol-5(2H)-ylidene]ethyl phosphate-binding positions include glycine 165 and 185–186 (IS).

This sequence belongs to the thiamine-phosphate synthase family. Mg(2+) serves as cofactor.

The catalysed reaction is 2-[(2R,5Z)-2-carboxy-4-methylthiazol-5(2H)-ylidene]ethyl phosphate + 4-amino-2-methyl-5-(diphosphooxymethyl)pyrimidine + 2 H(+) = thiamine phosphate + CO2 + diphosphate. It catalyses the reaction 2-(2-carboxy-4-methylthiazol-5-yl)ethyl phosphate + 4-amino-2-methyl-5-(diphosphooxymethyl)pyrimidine + 2 H(+) = thiamine phosphate + CO2 + diphosphate. The enzyme catalyses 4-methyl-5-(2-phosphooxyethyl)-thiazole + 4-amino-2-methyl-5-(diphosphooxymethyl)pyrimidine + H(+) = thiamine phosphate + diphosphate. It functions in the pathway cofactor biosynthesis; thiamine diphosphate biosynthesis; thiamine phosphate from 4-amino-2-methyl-5-diphosphomethylpyrimidine and 4-methyl-5-(2-phosphoethyl)-thiazole: step 1/1. Its function is as follows. Condenses 4-methyl-5-(beta-hydroxyethyl)thiazole monophosphate (THZ-P) and 2-methyl-4-amino-5-hydroxymethyl pyrimidine pyrophosphate (HMP-PP) to form thiamine monophosphate (TMP). This is Thiamine-phosphate synthase from Desulfitobacterium hafniense (strain Y51).